The following is a 356-amino-acid chain: tRNA N6-adenosine threonylcarbamoyltransferase (356 aa).

Residues histidine 124, histidine 128, and tyrosine 145 each contribute to the a divalent metal cation site. Residues 145-149, aspartate 177, glycine 192, glutamate 196, and asparagine 287 contribute to the substrate site; that span reads YVSGG. Residue aspartate 315 coordinates a divalent metal cation.

It belongs to the KAE1 / TsaD family. Component of the EKC/KEOPS complex composed of at least BUD32, CGI121, GON7, KAE1 and PCC1; the whole complex dimerizes. It depends on a divalent metal cation as a cofactor.

The protein resides in the cytoplasm. Its subcellular location is the nucleus. It carries out the reaction L-threonylcarbamoyladenylate + adenosine(37) in tRNA = N(6)-L-threonylcarbamoyladenosine(37) in tRNA + AMP + H(+). Its function is as follows. Component of the EKC/KEOPS complex that is required for the formation of a threonylcarbamoyl group on adenosine at position 37 (t(6)A37) in tRNAs that read codons beginning with adenine. The complex is probably involved in the transfer of the threonylcarbamoyl moiety of threonylcarbamoyl-AMP (TC-AMP) to the N6 group of A37. KAE1 likely plays a direct catalytic role in this reaction, but requires other protein(s) of the complex to fulfill this activity. The EKC/KEOPS complex also promotes both telomere uncapping and telomere elongation. The complex is required for efficient recruitment of transcriptional coactivators. In Yarrowia lipolytica (strain CLIB 122 / E 150) (Yeast), this protein is tRNA N6-adenosine threonylcarbamoyltransferase.